The following is a 438-amino-acid chain: Prenyltransferase malE (438 aa).

Residue glutamate 92 participates in substrate binding. Dimethylallyl diphosphate-binding residues include arginine 106, lysine 192, tyrosine 194, lysine 259, tyrosine 261, tyrosine 346, and tyrosine 411.

Belongs to the tryptophan dimethylallyltransferase family.

The enzyme catalyses (S)-3-(indol-3-ylmethyl)-6,7,8,8a-tetrahydropyrrolo[1,2-a]pyrazin-1-one + dimethylallyl diphosphate = (S)-3-{[2-(1,1-dimethylallyl)-indol-3-yl]methyl}-6,7,8,8a-tetrahydropyrrolo[1,2-a]pyrazin-1-one + diphosphate. The catalysed reaction is 1-hydroxy-3-(indol-3-ylmethyl)-6H,7H,8H-5lambda(5)-pyrrolo[1,2-a]pyrazine + dimethylallyl diphosphate = 1-hydroxy-3-{[2-(1,1-dimethylallyl)-indol-3-yl]methyl}-6H,7H,8H-5lambda(5)-pyrrolo[1,2-a]pyrazine + diphosphate. The protein operates within alkaloid biosynthesis. Functionally, prenyltransferase; part of the gene cluster that mediates the biosynthesis of malbrancheamide, a dichlorinated fungal indole alkaloid that belongs to a family of natural products containing a characteristic bicyclo[2.2.2]diazaoctane core. The first step of malbrancheamide biosynthesis involves coupling of L-proline and L-tryptophan by malG, a bimodular NRPS, to produce L-Pro-L-Trp aldehyde through reductive offloading. This compound undergoes spontaneous cyclization and dehydration to give a dienamine which is reverse prenylated at C-2 by malE. The other prenyltransferase present in the cluster, malB, displays modest activity, suggesting that may be a redundant gene in the pathway. Subsequently, a [4+2] Diels-Alder cyclo-addition catalyzed by the bifunctional enzyme malC forms the characteristic bicyclo[2.2.2]diazaoctane ring of premalbrancheamid. Finally, the flavin-dependent halogenase malA catalyzes the iterative dichlorination of the indole ring of premalbrancheamide to yield C-9 monochlorinated malbrancheamide B, C-8 monochlorinated isomalbrancheamide B, and dichlorinated malbrancheamide. MalA is also able to brominate premalbrancheamide at C-9 to yield malbrancheamide C, and, to a lesser extend, at C-8 to yield isomalbrancheamide C. Finally, malA can brominate C-9 monochlorinated malbrancheamide B at C-8 to yield malbrancheamide D, or C-8 monochlorinated isomalbrancheamide B at C-9 to produce isomalbrancheamide D. The chain is Prenyltransferase malE from Malbranchea aurantiaca.